A 362-amino-acid polypeptide reads, in one-letter code: Probable dual-specificity RNA methyltransferase RlmN (362 aa).

Glutamate 105 acts as the Proton acceptor in catalysis. In terms of domain architecture, Radical SAM core spans 111–344 (HEYGNSICVT…VTIRREQGHD (234 aa)). A disulfide bond links cysteine 118 and cysteine 349. Residues cysteine 125, cysteine 129, and cysteine 132 each contribute to the [4Fe-4S] cluster site. S-adenosyl-L-methionine is bound by residues 175 to 176 (GE), serine 207, 230 to 232 (SLH), and asparagine 306. The active-site S-methylcysteine intermediate is cysteine 349.

This sequence belongs to the radical SAM superfamily. RlmN family. The cofactor is [4Fe-4S] cluster.

It localises to the cytoplasm. It carries out the reaction adenosine(2503) in 23S rRNA + 2 reduced [2Fe-2S]-[ferredoxin] + 2 S-adenosyl-L-methionine = 2-methyladenosine(2503) in 23S rRNA + 5'-deoxyadenosine + L-methionine + 2 oxidized [2Fe-2S]-[ferredoxin] + S-adenosyl-L-homocysteine. The catalysed reaction is adenosine(37) in tRNA + 2 reduced [2Fe-2S]-[ferredoxin] + 2 S-adenosyl-L-methionine = 2-methyladenosine(37) in tRNA + 5'-deoxyadenosine + L-methionine + 2 oxidized [2Fe-2S]-[ferredoxin] + S-adenosyl-L-homocysteine. Its function is as follows. Specifically methylates position 2 of adenine 2503 in 23S rRNA and position 2 of adenine 37 in tRNAs. The polypeptide is Probable dual-specificity RNA methyltransferase RlmN (Bacillus anthracis (strain CDC 684 / NRRL 3495)).